A 698-amino-acid polypeptide reads, in one-letter code: Polyribonucleotide nucleotidyltransferase (698 aa).

Mg(2+)-binding residues include D490 and D496. Residues 557-616 (PKVVTMTIKPDKIRDVIGPGGKKINEIIDETGVKLDIEQDGTIFIGAVDQAMINRAREII) enclose the KH domain. Residues 626–694 (GQTYQATVKR…KQGRVNASHR (69 aa)) form the S1 motif domain.

It belongs to the polyribonucleotide nucleotidyltransferase family. The cofactor is Mg(2+).

The protein resides in the cytoplasm. It catalyses the reaction RNA(n+1) + phosphate = RNA(n) + a ribonucleoside 5'-diphosphate. Involved in mRNA degradation. Catalyzes the phosphorolysis of single-stranded polyribonucleotides processively in the 3'- to 5'-direction. The chain is Polyribonucleotide nucleotidyltransferase from Staphylococcus aureus (strain Mu3 / ATCC 700698).